Here is a 526-residue protein sequence, read N- to C-terminus: Peptide chain release factor 3 (526 aa).

The 270-residue stretch at Gly-8 to Gln-277 folds into the tr-type G domain. GTP contacts are provided by residues Ser-17–Thr-24, Asp-85–His-89, and Asn-139–Asp-142.

This sequence belongs to the TRAFAC class translation factor GTPase superfamily. Classic translation factor GTPase family. PrfC subfamily.

The protein resides in the cytoplasm. Its function is as follows. Increases the formation of ribosomal termination complexes and stimulates activities of RF-1 and RF-2. It binds guanine nucleotides and has strong preference for UGA stop codons. It may interact directly with the ribosome. The stimulation of RF-1 and RF-2 is significantly reduced by GTP and GDP, but not by GMP. In Aliivibrio fischeri (strain MJ11) (Vibrio fischeri), this protein is Peptide chain release factor 3.